A 209-amino-acid polypeptide reads, in one-letter code: Large ribosomal subunit protein uL3 (209 aa).

Residues threonine 133 to glycine 153 are disordered. Glutamine 150 is subject to N5-methylglutamine.

The protein belongs to the universal ribosomal protein uL3 family. As to quaternary structure, part of the 50S ribosomal subunit. Forms a cluster with proteins L14 and L19. Post-translationally, methylated by PrmB.

Functionally, one of the primary rRNA binding proteins, it binds directly near the 3'-end of the 23S rRNA, where it nucleates assembly of the 50S subunit. This chain is Large ribosomal subunit protein uL3, found in Pectobacterium atrosepticum (strain SCRI 1043 / ATCC BAA-672) (Erwinia carotovora subsp. atroseptica).